The following is a 1343-amino-acid chain: DNA-directed RNA polymerase subunit beta (1343 aa).

The protein belongs to the RNA polymerase beta chain family. As to quaternary structure, the RNAP catalytic core consists of 2 alpha, 1 beta, 1 beta' and 1 omega subunit. When a sigma factor is associated with the core the holoenzyme is formed, which can initiate transcription.

The enzyme catalyses RNA(n) + a ribonucleoside 5'-triphosphate = RNA(n+1) + diphosphate. Its function is as follows. DNA-dependent RNA polymerase catalyzes the transcription of DNA into RNA using the four ribonucleoside triphosphates as substrates. The protein is DNA-directed RNA polymerase subunit beta of Shewanella baltica (strain OS223).